Reading from the N-terminus, the 589-residue chain is GTPase LSG1-2 (589 aa).

The tract at residues 1–26 (MGKSEKTSLGRSLVKHHNHMIQESKD) is disordered. Positions 158–366 (WRQLWRVLER…LCDCPGLVFP (209 aa)) constitute a CP-type G domain. A DARXP motif motif is present at residues 176–180 (DARDP). The interval 206 to 209 (NKAD) is G4. Residue 206 to 209 (NKAD) participates in GTP binding. Residues 237-239 (AAT) are G5. The segment at 315-322 (GYPNVGKS) is G1. 318–323 (NVGKSS) provides a ligand contact to GTP. Positions 341–345 (GKTKH) are G2. Residues 359-362 (DCPG) are G3. Glycine 362 is a binding site for GTP. Residues 495–509 (GSESDDSAVGDETEN) are compositionally biased toward acidic residues. Disordered regions lie at residues 495–515 (GSESDDSAVGDETENEQVPGI) and 534–589 (SKKV…LTMR). Residues 534–541 (SKKVTAKK) carry the Nuclear localization signal motif. Residues 534-558 (SKKVTAKKQTASHKQHKKPQRKKDR) are compositionally biased toward basic residues. A compositionally biased stretch (polar residues) spans 580-589 (PANTGPLTMR).

The protein belongs to the TRAFAC class YlqF/YawG GTPase family. In terms of tissue distribution, ubiquitous, with the highest expression in reproductive and strongly dividing tissues.

Its subcellular location is the cytoplasm. The protein resides in the nucleus. In terms of biological role, GTPase involved in ribosome biogenesis. Binds to 23S rRNA and associates with 60S pre-ribosomes. Involved in early cotyledon and leaf development. This is GTPase LSG1-2 from Arabidopsis thaliana (Mouse-ear cress).